Here is a 204-residue protein sequence, read N- to C-terminus: tRNA (pseudouridine(54)-N(1))-methyltransferase (204 aa).

Residues L136 and G158 each coordinate S-adenosyl-L-methionine.

It belongs to the methyltransferase superfamily. TrmY family. Homodimer.

The protein localises to the cytoplasm. The catalysed reaction is pseudouridine(54) in tRNA + S-adenosyl-L-methionine = N(1)-methylpseudouridine(54) in tRNA + S-adenosyl-L-homocysteine + H(+). Its function is as follows. Specifically catalyzes the N1-methylation of pseudouridine at position 54 (Psi54) in tRNAs. This chain is tRNA (pseudouridine(54)-N(1))-methyltransferase, found in Pyrococcus abyssi (strain GE5 / Orsay).